The primary structure comprises 1791 residues: Protein TIC 214 (1791 aa).

6 helical membrane passes run 19–39, 68–88, 91–111, 133–153, 176–196, and 227–247; these read IINS…FSIG, FIAG…HLAL, PHTI…WNNH, VFLN…SSML, VGWL…LVWI, and IFSI…PSPI. The interval 1492-1511 is disordered; that stretch reads ASQVELESDKENKKNPESAL. Residues 1498–1511 show a composition bias toward basic and acidic residues; the sequence is ESDKENKKNPESAL.

The protein belongs to the TIC214 family. As to quaternary structure, part of the Tic complex.

It localises to the plastid. The protein localises to the chloroplast inner membrane. Involved in protein precursor import into chloroplasts. May be part of an intermediate translocation complex acting as a protein-conducting channel at the inner envelope. This chain is Protein TIC 214, found in Barbarea verna (Land cress).